Reading from the N-terminus, the 749-residue chain is 5-methyltetrahydropteroyltriglutamate--homocysteine methyltransferase (749 aa).

Residues 15–18 and K114 each bind 5-methyltetrahydropteroyltri-L-glutamate; that span reads RELK. L-homocysteine-binding positions include 425-427 and E478; that span reads IGS. L-methionine contacts are provided by residues 425–427 and E478; that span reads IGS. W555 contacts 5-methyltetrahydropteroyltri-L-glutamate. L-homocysteine is bound at residue D593. L-methionine is bound at residue D593. Residue E599 participates in 5-methyltetrahydropteroyltri-L-glutamate binding. 3 residues coordinate Zn(2+): H636, C638, and E660. Residue H689 is the Proton donor of the active site. Position 721 (C721) interacts with Zn(2+).

Belongs to the vitamin-B12 independent methionine synthase family. The cofactor is Zn(2+).

It catalyses the reaction 5-methyltetrahydropteroyltri-L-glutamate + L-homocysteine = tetrahydropteroyltri-L-glutamate + L-methionine. It participates in amino-acid biosynthesis; L-methionine biosynthesis via de novo pathway; L-methionine from L-homocysteine (MetE route): step 1/1. Catalyzes the transfer of a methyl group from 5-methyltetrahydrofolate to homocysteine resulting in methionine formation. The polypeptide is 5-methyltetrahydropteroyltriglutamate--homocysteine methyltransferase (Streptococcus pneumoniae serotype 2 (strain D39 / NCTC 7466)).